Reading from the N-terminus, the 161-residue chain is Zinc finger A20 and AN1 domain-containing stress-associated protein 9 (161 aa).

The A20-type zinc finger occupies 17-51 (PEAPILCVNNCGFFGSSMTNNMCSKCYRDFVKVTT). Residues cysteine 23, cysteine 27, cysteine 39, and cysteine 42 each contribute to the Zn(2+) site. The tract at residues 62–99 (FTPASSSKTPLEPAKPDEVPAAAVEDKQAAQEPPKPPS) is disordered. The segment covering 75-90 (AKPDEVPAAAVEDKQA) has biased composition (basic and acidic residues). The AN1-type zinc-finger motif lies at 96–142 (KPPSNRCLSCRKKVGLTGFQCRCGGTFCSTHRYTEAHDCTFDYKKAG). Zn(2+)-binding residues include cysteine 102, cysteine 105, cysteine 116, cysteine 118, cysteine 123, histidine 126, histidine 132, and cysteine 134.

Functionally, may be involved in environmental stress response. This is Zinc finger A20 and AN1 domain-containing stress-associated protein 9 (SAP9) from Oryza sativa subsp. japonica (Rice).